Reading from the N-terminus, the 72-residue chain is N-alpha-acetyltransferase 38, NatC auxiliary subunit (72 aa).

In terms of domain architecture, Sm spans 3 to 72 (NGEILLTSWL…KHIKSFSVRA (70 aa)).

In terms of assembly, component of the N-terminal acetyltransferase C (NatC) complex, composed of the catalytic subunit Naa30, a large auxiliary subunit Naa35 and a small auxiliary subunit Naa38.

The protein localises to the endoplasmic reticulum. Component of the NatC N-terminal acetyltransferase, which associates with the ribosome to acetylate nascent protein chains in a cotranslational manner. NatC acetylates protein N-termini starting with methionine, followed by a hydrophobic or amphipathic amino acid, with amino acids at positions 3 and 4 also contributing to NatC recognition. The first 4 amino acids of cognate substrates are recognized at the Naa30-Naa35 interface. NatC-dependent acetylation targets various substrate proteins to specific subcellular sites. This is N-alpha-acetyltransferase 38, NatC auxiliary subunit (naa38) from Schizosaccharomyces pombe (strain 972 / ATCC 24843) (Fission yeast).